Reading from the N-terminus, the 309-residue chain is Pantothenate kinase (309 aa).

92 to 99 is an ATP binding site; that stretch reads GSVAVGKS.

It belongs to the prokaryotic pantothenate kinase family.

Its subcellular location is the cytoplasm. The catalysed reaction is (R)-pantothenate + ATP = (R)-4'-phosphopantothenate + ADP + H(+). The protein operates within cofactor biosynthesis; coenzyme A biosynthesis; CoA from (R)-pantothenate: step 1/5. The sequence is that of Pantothenate kinase from Latilactobacillus sakei subsp. sakei (strain 23K) (Lactobacillus sakei subsp. sakei).